The chain runs to 376 residues: tRNA-specific 2-thiouridylase MnmA (376 aa).

ATP-binding positions include 16 to 23 and Leu-42; that span reads AMSGGVDS. Cys-111 (nucleophile) is an active-site residue. Cys-111 and Cys-210 form a disulfide bridge. Gly-135 lines the ATP pocket. The segment at 158–160 is interaction with tRNA; the sequence is KDQ. Residue Cys-210 is the Cysteine persulfide intermediate of the active site.

Belongs to the MnmA/TRMU family.

Its subcellular location is the cytoplasm. The enzyme catalyses S-sulfanyl-L-cysteinyl-[protein] + uridine(34) in tRNA + AH2 + ATP = 2-thiouridine(34) in tRNA + L-cysteinyl-[protein] + A + AMP + diphosphate + H(+). Functionally, catalyzes the 2-thiolation of uridine at the wobble position (U34) of tRNA, leading to the formation of s(2)U34. In Streptomyces coelicolor (strain ATCC BAA-471 / A3(2) / M145), this protein is tRNA-specific 2-thiouridylase MnmA.